We begin with the raw amino-acid sequence, 163 residues long: Mediator of RNA polymerase II transcription subunit 10 (163 aa).

The segment at 57 to 79 (AAPDPSYVQSPPSRTGLSPADPP) is disordered. Residues 63-72 (YVQSPPSRTG) are compositionally biased toward polar residues.

It belongs to the Mediator complex subunit 10 family. As to quaternary structure, component of the Mediator complex.

It localises to the nucleus. In terms of biological role, component of the Mediator complex, a coactivator involved in the regulated transcription of nearly all RNA polymerase II-dependent genes. Mediator functions as a bridge to convey information from gene-specific regulatory proteins to the basal RNA polymerase II transcription machinery. Mediator is recruited to promoters by direct interactions with regulatory proteins and serves as a scaffold for the assembly of a functional preinitiation complex with RNA polymerase II and the general transcription factors. The polypeptide is Mediator of RNA polymerase II transcription subunit 10 (NUT2) (Coccidioides immitis (strain RS) (Valley fever fungus)).